A 400-amino-acid chain; its full sequence is MVSSDCSILLCDANSFFASVHQALDPGLRGRPVIVAGREATRHGIVLAASYEAKLGYGIKTGMTVREARGLCPHGVFIPPRHDLYIEFSTRILRIMRDFTPLVEPFSIDEAWLDVRGCRDLHGSPLTVARRLKQRIREEVGITTSVGLGPSKLLAKMAAEMQKPDGLTVLDYADVPGKMWPLPVRELFGIGPRMEAHLAKLGIHTIGELAGFPVEVLIKRFGVVGRILHQCARGIDYSPVDPHSLDTVKSIGHQITLPRDYRGYEEIEVVLLELAELVARRVRLGGYLGRTVAISLKDPEFHWLGRSRTLPHYTDTAGDIYAAARHLLHRHWPEWRAVRLVGVSLAGLVPATVRQEDLFGRVERQARLDRACDQLKNRYGERVIHRAVSLTGAGVLYGGS.

One can recognise a UmuC domain in the interval 8–191; that stretch reads ILLCDANSFF…LPVRELFGIG (184 aa). 2 residues coordinate Mg(2+): D12 and D109. E110 is a catalytic residue.

It belongs to the DNA polymerase type-Y family. Monomer. Mg(2+) serves as cofactor.

Its subcellular location is the cytoplasm. It carries out the reaction DNA(n) + a 2'-deoxyribonucleoside 5'-triphosphate = DNA(n+1) + diphosphate. Functionally, poorly processive, error-prone DNA polymerase involved in untargeted mutagenesis. Copies undamaged DNA at stalled replication forks, which arise in vivo from mismatched or misaligned primer ends. These misaligned primers can be extended by PolIV. Exhibits no 3'-5' exonuclease (proofreading) activity. May be involved in translesional synthesis, in conjunction with the beta clamp from PolIII. The polypeptide is DNA polymerase IV (Moorella thermoacetica (strain ATCC 39073 / JCM 9320)).